The chain runs to 155 residues: uncharacterized protein (155 aa).

2 disordered regions span residues 24–63 and 80–155; these read RVGY…VVLK and KAAK…DENE. Residues 43–56 are compositionally biased toward acidic residues; that stretch reads PDEDGNESDKEDEQ. At S50 the chain carries Phosphoserine. K108 is subject to N6-acetyllysine. The segment covering 128–147 has biased composition (polar residues); that stretch reads KQSPVRKNSQKQIKNSSLLS. A phosphoserine mark is found at S130, S147, and S150.

This is an uncharacterized protein from Rattus norvegicus (Rat).